The chain runs to 859 residues: Leucine--tRNA ligase (859 aa).

The 'HIGH' region motif lies at 42-52; that stretch reads PYPSGRLHMGH. The 'KMSKS' region signature appears at 618 to 622; the sequence is KMSKS. Position 621 (K621) interacts with ATP.

This sequence belongs to the class-I aminoacyl-tRNA synthetase family.

It is found in the cytoplasm. The catalysed reaction is tRNA(Leu) + L-leucine + ATP = L-leucyl-tRNA(Leu) + AMP + diphosphate. The sequence is that of Leucine--tRNA ligase from Shewanella amazonensis (strain ATCC BAA-1098 / SB2B).